The primary structure comprises 189 residues: Molybdenum cofactor guanylyltransferase (189 aa).

GTP-binding positions include 12–14, lysine 24, aspartate 68, and aspartate 94; that span reads LAG. Residue aspartate 94 coordinates Mg(2+).

Belongs to the MobA family. As to quaternary structure, monomer. Mg(2+) serves as cofactor.

The protein localises to the cytoplasm. The enzyme catalyses Mo-molybdopterin + GTP + H(+) = Mo-molybdopterin guanine dinucleotide + diphosphate. Its function is as follows. Transfers a GMP moiety from GTP to Mo-molybdopterin (Mo-MPT) cofactor (Moco or molybdenum cofactor) to form Mo-molybdopterin guanine dinucleotide (Mo-MGD) cofactor. In Xanthomonas euvesicatoria pv. vesicatoria (strain 85-10) (Xanthomonas campestris pv. vesicatoria), this protein is Molybdenum cofactor guanylyltransferase.